We begin with the raw amino-acid sequence, 70 residues long: MPREIKDIKDFLIKARRKDAKSVKIKKNPENVKFKVRCSRFLYTLVITDKEKAEKLKQSLPPGLQVKEVK.

The protein belongs to the eukaryotic ribosomal protein eL38 family.

The chain is Large ribosomal subunit protein eL38 (RpL38) from Bombyx mori (Silk moth).